The following is a 225-amino-acid chain: Glycerol-3-phosphate acyltransferase (225 aa).

The next 6 helical transmembrane spans lie at 6–26 (FFFF…LIIG), 55–75 (WGIV…IICL), 95–115 (DIAI…SIFN), 135–155 (PFIG…VGYA), 160–180 (IMAT…PGIT), and 187–207 (ILYF…HSNI).

The protein belongs to the PlsY family. As to quaternary structure, probably interacts with PlsX.

The protein localises to the cell membrane. It carries out the reaction an acyl phosphate + sn-glycerol 3-phosphate = a 1-acyl-sn-glycero-3-phosphate + phosphate. Its pathway is lipid metabolism; phospholipid metabolism. In terms of biological role, catalyzes the transfer of an acyl group from acyl-phosphate (acyl-PO(4)) to glycerol-3-phosphate (G3P) to form lysophosphatidic acid (LPA). This enzyme utilizes acyl-phosphate as fatty acyl donor, but not acyl-CoA or acyl-ACP. The sequence is that of Glycerol-3-phosphate acyltransferase from Phytoplasma australiense.